The following is a 113-amino-acid chain: Putative insulin-like growth factor 2-associated protein (113 aa).

In terms of tissue distribution, expressed in fetal and adult liver.

The protein is Putative insulin-like growth factor 2-associated protein of Homo sapiens (Human).